We begin with the raw amino-acid sequence, 614 residues long: Probable pectinesterase/pectinesterase inhibitor 13 (614 aa).

The chain crosses the membrane as a helical span at residues 25-45; the sequence is IIVGTVSLLVVVAAIVGGAFA. The interval 55–102 is disordered; it reads QQQQQQQAKNHNKSGSGNNVVKDSDKKSPSPPTPSQKAPVSAAQSVKP. 7 N-linked (GlcNAc...) asparagine glycosylation sites follow: Asn-66, Asn-128, Asn-197, Asn-243, Asn-301, Asn-351, and Asn-367. The pectinesterase inhibitor 13 stretch occupies residues 103 to 255; that stretch reads GQGDKIIQTL…QVLTSNSLAL (153 aa). The interval 301 to 598 is pectinesterase 13; the sequence is NATVAKDGSG…YTVGPFLQGD (298 aa). Substrate is bound by residues Thr-376 and Gln-406. Asp-429 acts as the Proton donor; for pectinesterase activity in catalysis. Cys-443 and Cys-463 are joined by a disulfide. The active-site Nucleophile; for pectinesterase activity is the Asp-450. Residues Arg-518 and Trp-520 each coordinate substrate. Residues Asn-522 and Asn-588 are each glycosylated (N-linked (GlcNAc...) asparagine).

This sequence in the N-terminal section; belongs to the PMEI family. It in the C-terminal section; belongs to the pectinesterase family. Expressed in flower buds.

It is found in the membrane. It catalyses the reaction [(1-&gt;4)-alpha-D-galacturonosyl methyl ester](n) + n H2O = [(1-&gt;4)-alpha-D-galacturonosyl](n) + n methanol + n H(+). The protein operates within glycan metabolism; pectin degradation; 2-dehydro-3-deoxy-D-gluconate from pectin: step 1/5. Functionally, acts in the modification of cell walls via demethylesterification of cell wall pectin. This chain is Probable pectinesterase/pectinesterase inhibitor 13 (PME13), found in Arabidopsis thaliana (Mouse-ear cress).